A 448-amino-acid polypeptide reads, in one-letter code: N-succinylarginine dihydrolase (448 aa).

Substrate contacts are provided by residues 19 to 28 (GGLSYGNVAS), N110, and 137 to 138 (HR). E174 is a catalytic residue. R214 contributes to the substrate binding site. H250 is a catalytic residue. Substrate is bound by residues D252 and N365. C371 (nucleophile) is an active-site residue.

The protein belongs to the succinylarginine dihydrolase family. Homodimer.

The catalysed reaction is N(2)-succinyl-L-arginine + 2 H2O + 2 H(+) = N(2)-succinyl-L-ornithine + 2 NH4(+) + CO2. It participates in amino-acid degradation; L-arginine degradation via AST pathway; L-glutamate and succinate from L-arginine: step 2/5. Functionally, catalyzes the hydrolysis of N(2)-succinylarginine into N(2)-succinylornithine, ammonia and CO(2). This is N-succinylarginine dihydrolase from Pseudomonas syringae pv. syringae (strain B728a).